A 347-amino-acid polypeptide reads, in one-letter code: N-acetyl-gamma-glutamyl-phosphate reductase (347 aa).

Cys153 is a catalytic residue.

Belongs to the NAGSA dehydrogenase family. Type 1 subfamily.

It localises to the cytoplasm. It carries out the reaction N-acetyl-L-glutamate 5-semialdehyde + phosphate + NADP(+) = N-acetyl-L-glutamyl 5-phosphate + NADPH + H(+). Its pathway is amino-acid biosynthesis; L-arginine biosynthesis; N(2)-acetyl-L-ornithine from L-glutamate: step 3/4. Functionally, catalyzes the NADPH-dependent reduction of N-acetyl-5-glutamyl phosphate to yield N-acetyl-L-glutamate 5-semialdehyde. This Mycobacterium avium (strain 104) protein is N-acetyl-gamma-glutamyl-phosphate reductase.